Here is a 297-residue protein sequence, read N- to C-terminus: MNLNPFWSMSTNTGRKRSDGEEQSGEQQQQQRASPARPSFGKKQLPSIPKNALPITKPASPAATAQLANGTHASYGPFYLEYSLLAEFTLVIKQKLPGIYVQPSYKSALMWFGVIFIRHGLYQDGVFKFTVYIPDNYPDGECPRVVFDIPVFHPLVDPVSGELDVRRAFTKWRRNHNHIWQVLMYARTVFYKINTMEPLNPEAAVLYDKDVQLFKSKVVDSVKLCNSHLFDQPKMDDPYAISFSSWNPAIHDDAKERMFTHKRRPEDHHKGLQVSGLSWVKPGSTQPFSKDDNPPQN.

Residues M1–T13 show a composition bias toward polar residues. The disordered stretch occupies residues M1 to L45. Over residues G25–S39 the composition is skewed to low complexity. A UBC core domain is found at Y79–S227. A disordered region spans residues K262–N297.

Belongs to the ubiquitin-conjugating enzyme family. FTS subfamily.

Its subcellular location is the cytoplasm. It localises to the cell membrane. Its function is as follows. May function to promote vesicle trafficking and/or fusion. May also regulate apoptosis. This chain is AKT-interacting protein (aktip), found in Salmo salar (Atlantic salmon).